The following is a 310-amino-acid chain: Altered inheritance of mitochondria protein 46, mitochondrial (310 aa).

The transit peptide at 1–20 (MRLISKVLVKTNCLEVGMRR) directs the protein to the mitochondrion.

Belongs to the AIM18/AIM46 family.

The protein localises to the mitochondrion. The polypeptide is Altered inheritance of mitochondria protein 46, mitochondrial (AIM46) (Saccharomyces cerevisiae (strain YJM789) (Baker's yeast)).